The primary structure comprises 229 residues: DNA mismatch repair protein MutH (229 aa).

This sequence belongs to the MutH family.

The protein localises to the cytoplasm. Functionally, sequence-specific endonuclease that cleaves unmethylated GATC sequences. It is involved in DNA mismatch repair. The protein is DNA mismatch repair protein MutH of Shigella flexneri.